We begin with the raw amino-acid sequence, 133 residues long: MAKLQAITLSGIGKNGDVTLNLNPRGVNPTNGVAALSEAGAVPALEKRVTISVSQPSRNRKNYKVQVKIQNPTSCTASGTCDPSVTRSAYADVTFSFTQYSTDEERALVRTELKALLADPMLIDAIDNLNPAY.

Belongs to the Leviviricetes capsid protein family. In terms of assembly, homodimer. The capsid protein dimer binds to the viral RNA via an operator hairpin, but also many other RNA sequences in the viral genome.

Its subcellular location is the virion. Its function is as follows. Capsid protein self-assembles to form an icosahedral capsid with a T=3 symmetry, about 26 nm in diameter, and consisting of 89 capsid proteins dimers (178 capsid proteins). Involved in viral genome encapsidation through the interaction between a capsid protein dimer and the multiple packaging signals present in the RNA genome. Binding of the capsid proteins to the viral RNA induces a conformational change required for efficient T=3 shell formation. The capsid also contains 1 copy of the A2 maturation protein. Functionally, acts as a translational repressor of viral replicase synthesis late in infection. This latter function is the result of capsid protein interaction with an RNA hairpin which contains the replicase ribosome-binding site. The sequence is that of Capsid protein from Escherichia coli.